Reading from the N-terminus, the 316-residue chain is Cell division protein ZipA (316 aa).

Over 1–5 (MQELR) the chain is Periplasmic. The chain crosses the membrane as a helical span at residues 6–26 (FVLIVVGALAIAALLFHGLWS). Topologically, residues 27 to 316 (SKKEGKAKFG…QIVEFNAANA (290 aa)) are cytoplasmic. The interval 36–65 (GNKPLGKLDVDQGDKDSVEQERSFAPATED) is disordered. Residues 41 to 57 (GKLDVDQGDKDSVEQER) show a composition bias toward basic and acidic residues.

The protein belongs to the ZipA family. As to quaternary structure, interacts with FtsZ via their C-terminal domains.

It is found in the cell inner membrane. In terms of biological role, essential cell division protein that stabilizes the FtsZ protofilaments by cross-linking them and that serves as a cytoplasmic membrane anchor for the Z ring. Also required for the recruitment to the septal ring of downstream cell division proteins. This Vibrio parahaemolyticus serotype O3:K6 (strain RIMD 2210633) protein is Cell division protein ZipA.